A 423-amino-acid chain; its full sequence is Replication factor C large subunit (423 aa).

An ATP-binding site is contributed by 50 to 57 (GPAGCGKT).

Belongs to the activator 1 small subunits family. RfcL subfamily. As to quaternary structure, heteromultimer composed of small subunits (RfcS) and large subunits (RfcL).

Part of the RFC clamp loader complex which loads the PCNA sliding clamp onto DNA. The sequence is that of Replication factor C large subunit from Staphylothermus marinus (strain ATCC 43588 / DSM 3639 / JCM 9404 / F1).